The chain runs to 351 residues: Histidinol-phosphate aminotransferase (351 aa).

K221 is subject to N6-(pyridoxal phosphate)lysine.

This sequence belongs to the class-II pyridoxal-phosphate-dependent aminotransferase family. Histidinol-phosphate aminotransferase subfamily. As to quaternary structure, homodimer. Requires pyridoxal 5'-phosphate as cofactor.

It catalyses the reaction L-histidinol phosphate + 2-oxoglutarate = 3-(imidazol-4-yl)-2-oxopropyl phosphate + L-glutamate. The protein operates within amino-acid biosynthesis; L-histidine biosynthesis; L-histidine from 5-phospho-alpha-D-ribose 1-diphosphate: step 7/9. The chain is Histidinol-phosphate aminotransferase from Staphylococcus epidermidis (strain ATCC 12228 / FDA PCI 1200).